Reading from the N-terminus, the 386-residue chain is Succinate--CoA ligase [ADP-forming] subunit beta (386 aa).

The ATP-grasp domain maps to 9–244; sequence KEILRNFGVP…LDEEDPAEVE (236 aa). Residues Lys46, 53-55, Glu99, Ala102, and Glu107 each bind ATP; that span reads GRG. Residues Asn199 and Asp213 each coordinate Mg(2+). Residues Asn264 and 321 to 323 contribute to the substrate site; that span reads GIM.

This sequence belongs to the succinate/malate CoA ligase beta subunit family. As to quaternary structure, heterotetramer of two alpha and two beta subunits. The cofactor is Mg(2+).

It catalyses the reaction succinate + ATP + CoA = succinyl-CoA + ADP + phosphate. The enzyme catalyses GTP + succinate + CoA = succinyl-CoA + GDP + phosphate. It functions in the pathway carbohydrate metabolism; tricarboxylic acid cycle; succinate from succinyl-CoA (ligase route): step 1/1. Its function is as follows. Succinyl-CoA synthetase functions in the citric acid cycle (TCA), coupling the hydrolysis of succinyl-CoA to the synthesis of either ATP or GTP and thus represents the only step of substrate-level phosphorylation in the TCA. The beta subunit provides nucleotide specificity of the enzyme and binds the substrate succinate, while the binding sites for coenzyme A and phosphate are found in the alpha subunit. The polypeptide is Succinate--CoA ligase [ADP-forming] subunit beta (Polaromonas sp. (strain JS666 / ATCC BAA-500)).